We begin with the raw amino-acid sequence, 75 residues long: Sec-independent protein translocase protein TatA (75 aa).

The chain crosses the membrane as a helical span at residues 1 to 21 (MGSFSIWHWLVVLAIVLLVFG). The tract at residues 41-75 (KGMRDEDKPNAQLGDESRTQDASRTAQDEHDRNAR) is disordered.

Belongs to the TatA/E family. In terms of assembly, the Tat system comprises two distinct complexes: a TatABC complex, containing multiple copies of TatA, TatB and TatC subunits, and a separate TatA complex, containing only TatA subunits. Substrates initially bind to the TatABC complex, which probably triggers association of the separate TatA complex to form the active translocon.

Its subcellular location is the cell inner membrane. Part of the twin-arginine translocation (Tat) system that transports large folded proteins containing a characteristic twin-arginine motif in their signal peptide across membranes. TatA could form the protein-conducting channel of the Tat system. The sequence is that of Sec-independent protein translocase protein TatA from Stenotrophomonas maltophilia (strain K279a).